Here is a 250-residue protein sequence, read N- to C-terminus: Probable dihydroorotate dehydrogenase B (NAD(+)), electron transfer subunit (250 aa).

Residues 1-89 (MINLKIEENV…RGPYGNGFDV (89 aa)) form the FAD-binding FR-type domain. Residues Cys200, Cys205, Cys208, and Cys216 each coordinate [2Fe-2S] cluster.

The protein belongs to the PyrK family. As to quaternary structure, heterotetramer of 2 PyrK and 2 PyrD type B subunits. Requires [2Fe-2S] cluster as cofactor. FAD serves as cofactor.

It participates in pyrimidine metabolism; UMP biosynthesis via de novo pathway; orotate from (S)-dihydroorotate (NAD(+) route): step 1/1. Its function is as follows. Responsible for channeling the electrons from the oxidation of dihydroorotate from the FMN redox center in the PyrD type B subunit to the ultimate electron acceptor NAD(+). The polypeptide is Probable dihydroorotate dehydrogenase B (NAD(+)), electron transfer subunit (Thermoplasma volcanium (strain ATCC 51530 / DSM 4299 / JCM 9571 / NBRC 15438 / GSS1)).